A 273-amino-acid polypeptide reads, in one-letter code: Flagellin FljM (273 aa).

The protein belongs to the bacterial flagellin family. In terms of assembly, in C.crescentus, the flagellar filament is composed of multiple flagellins of 29 kDa; 27 kDa and 25 kDa.

The protein localises to the secreted. It localises to the bacterial flagellum. Functionally, flagellin is the subunit protein which polymerizes to form the filaments of bacterial flagella. This Caulobacter vibrioides (strain ATCC 19089 / CIP 103742 / CB 15) (Caulobacter crescentus) protein is Flagellin FljM (fljM).